A 147-amino-acid polypeptide reads, in one-letter code: Response regulator Rcp1 (147 aa).

The 126-residue stretch at 10-135 (VILLVEDSKA…DLFKMVQGIE (126 aa)) folds into the Response regulatory domain. Asp68 is subject to 4-aspartylphosphate.

Post-translationally, phosphorylated by Cph1.

Forms a two-component system with Cph1 in which it acts as receiver substrate. The sequence is that of Response regulator Rcp1 (rcp1) from Synechocystis sp. (strain ATCC 27184 / PCC 6803 / Kazusa).